Consider the following 438-residue polypeptide: Acid phosphatase type 7 (438 aa).

The N-terminal stretch at M1–G26 is a signal peptide. Fe cation contacts are provided by D141, D170, and Y173. A Zn(2+)-binding site is contributed by D170. N205 contacts Zn(2+). N211 carries an N-linked (GlcNAc...) asparagine glycan. Zn(2+) contacts are provided by H286 and H333. Residue H335 coordinates Fe cation. N-linked (GlcNAc...) asparagine glycosylation is found at N350 and N404.

The protein belongs to the metallophosphoesterase superfamily. Purple acid phosphatase family. Fe cation serves as cofactor. Requires Zn(2+) as cofactor.

It localises to the secreted. The enzyme catalyses a phosphate monoester + H2O = an alcohol + phosphate. The protein is Acid phosphatase type 7 of Homo sapiens (Human).